Consider the following 60-residue polypeptide: Large ribosomal subunit protein bL32 (60 aa).

Belongs to the bacterial ribosomal protein bL32 family.

This Synechococcus sp. (strain JA-3-3Ab) (Cyanobacteria bacterium Yellowstone A-Prime) protein is Large ribosomal subunit protein bL32.